Consider the following 98-residue polypeptide: Peptide YY (98 aa).

A signal peptide spans 1–28; the sequence is MVAVRRPWPVMVAMLLVLLACLGALVDA. Serine 41 carries the phosphoserine modification. A Tyrosine amide modification is found at tyrosine 64. A propeptide spanning residues 68–98 is cleaved from the precursor; that stretch reads EVPAALFSKLLFTDDSENLPFRSRPEGVDQW.

This sequence belongs to the NPY family. In terms of processing, the peptide YY form is cleaved at Pro-30 by the prolyl endopeptidase FAP (seprase) activity (in vitro) to generate peptide YY(3-36).

The protein resides in the secreted. In terms of biological role, this gut peptide inhibits exocrine pancreatic secretion, has a vasoconstrictory action and inhibitis jejunal and colonic mobility. This Rattus norvegicus (Rat) protein is Peptide YY (Pyy).